Reading from the N-terminus, the 98-residue chain is Pore-forming peptide amoebapore A (98 aa).

A signal peptide spans Met1–Gln21. A Saposin B-type domain is found at Gly22 to Cys98. 3 cysteine pairs are disulfide-bonded: Cys26/Cys98, Cys29/Cys92, and Cys56/Cys67.

In terms of assembly, monomer (at pH below 4 and pH above 6). Homodimer (at pH 4-6). Hexamer; formed during insertion in the membrane.

Its subcellular location is the cytoplasmic granule. In terms of biological role, forms pores in the cell membrane of host cells. Has antibacterial activity against M.luteus, no activity against E.coli. Implicated in the cytolytic activity of the parasite. The protein is Pore-forming peptide amoebapore A of Entamoeba histolytica (strain ATCC 30459 / HM-1:IMSS / ABRM).